The chain runs to 212 residues: Protein YIPF5 homolog (212 aa).

Residues 1 to 79 are Cytoplasmic-facing; the sequence is MNNNNSFNFI…KKIDSHIMDD (79 aa). The helical transmembrane segment at 80 to 100 threads the bilayer; that stretch reads TDLGGPILFGLLLGFSLLMSG. A topological domain (lumenal) is located at residue Lys-101. Residues 102–122 form a helical membrane-spanning segment; the sequence is IQFGYIYGLGLIGCVSMYIVL. Residues 123–128 lie on the Cytoplasmic side of the membrane; sequence NLMSEK. Residues 129–149 form a helical membrane-spanning segment; sequence GIDIYRVISVLGYCLLPMIFL. Topologically, residues 150–163 are lumenal; the sequence is SFTSLIININGMVG. A helical transmembrane segment spans residues 164-186; the sequence is YILIGFAIVWSTYSASKMFVKVL. The Cytoplasmic segment spans residues 187–191; the sequence is SMIDQ. A helical membrane pass occupies residues 192–212; sequence RILVAYPVGLLYTGFALITAF.

It belongs to the YIP1 family.

It localises to the endoplasmic reticulum membrane. Its subcellular location is the golgi apparatus. It is found in the cis-Golgi network membrane. Functionally, plays a role in transport between endoplasmic reticulum and Golgi. The polypeptide is Protein YIPF5 homolog (yipf5) (Dictyostelium discoideum (Social amoeba)).